A 457-amino-acid chain; its full sequence is Serine/threonine-protein phosphatase 2A regulatory subunit B'' subunit gamma (457 aa).

2 consecutive EF-hand domains span residues 276-311 and 344-379; these read PSALRVYGQYLNLDKDHNGMLSKEELSRYGTGTLTS and KEPAALQYIFKLLDMENKGYLNVFALNYFFRAIQEQ. Residues D289, D291, N293, M295, and E300 each contribute to the Ca(2+) site.

It is found in the nucleus. It localises to the cytoplasm. Functionally, possible role in the regulation of cell death. In Danio rerio (Zebrafish), this protein is Serine/threonine-protein phosphatase 2A regulatory subunit B'' subunit gamma (ppp2r3c).